Consider the following 26-residue polypeptide: Omega-conotoxin TVIA (26 aa).

Cystine bridges form between C1–C16, C8–C19, and C15–C26. A 4-hydroxyproline mark is found at P4, P10, and P21.

This sequence belongs to the conotoxin O1 superfamily. Expressed by the venom duct.

The protein localises to the secreted. Functionally, omega-conotoxins act at presynaptic membranes, they bind and block voltage-gated calcium channels (Cav). The sequence is that of Omega-conotoxin TVIA from Conus tulipa (Fish-hunting cone snail).